The chain runs to 450 residues: Cysteine protease ATG4C (450 aa).

Cys-112 serves as the catalytic Nucleophile. Residues Asp-336 and His-338 contribute to the active site.

Belongs to the peptidase C54 family.

It localises to the cytoplasm. It carries out the reaction [protein]-C-terminal L-amino acid-glycyl-phosphatidylethanolamide + H2O = [protein]-C-terminal L-amino acid-glycine + a 1,2-diacyl-sn-glycero-3-phosphoethanolamine. Its function is as follows. Cysteine protease that plays a key role in autophagy by mediating both proteolytic activation and delipidation of ATG8 family proteins. The protease activity is required for proteolytic activation of ATG8 family proteins: cleaves the C-terminal amino acid of ATG8 proteins to reveal a C-terminal glycine. Exposure of the glycine at the C-terminus is essential for ATG8 proteins conjugation to phosphatidylethanolamine (PE) and insertion to membranes, which is necessary for autophagy. In addition to the protease activity, also mediates delipidation of ATG8 family proteins. Catalyzes delipidation of PE-conjugated forms of ATG8 proteins during macroautophagy. The polypeptide is Cysteine protease ATG4C (Xenopus laevis (African clawed frog)).